Reading from the N-terminus, the 158-residue chain is Transcription elongation factor GreA (158 aa).

This sequence belongs to the GreA/GreB family.

In terms of biological role, necessary for efficient RNA polymerase transcription elongation past template-encoded arresting sites. The arresting sites in DNA have the property of trapping a certain fraction of elongating RNA polymerases that pass through, resulting in locked ternary complexes. Cleavage of the nascent transcript by cleavage factors such as GreA or GreB allows the resumption of elongation from the new 3'terminus. GreA releases sequences of 2 to 3 nucleotides. This is Transcription elongation factor GreA from Pelagibacter ubique (strain HTCC1062).